The primary structure comprises 202 residues: Imidazoleglycerol-phosphate dehydratase (202 aa).

This sequence belongs to the imidazoleglycerol-phosphate dehydratase family.

The protein resides in the cytoplasm. The enzyme catalyses D-erythro-1-(imidazol-4-yl)glycerol 3-phosphate = 3-(imidazol-4-yl)-2-oxopropyl phosphate + H2O. Its pathway is amino-acid biosynthesis; L-histidine biosynthesis; L-histidine from 5-phospho-alpha-D-ribose 1-diphosphate: step 6/9. This chain is Imidazoleglycerol-phosphate dehydratase, found in Brucella anthropi (strain ATCC 49188 / DSM 6882 / CCUG 24695 / JCM 21032 / LMG 3331 / NBRC 15819 / NCTC 12168 / Alc 37) (Ochrobactrum anthropi).